The sequence spans 647 residues: RAF proto-oncogene serine/threonine-protein kinase (647 aa).

S43 carries the phosphoserine modification. Residues 56-131 enclose the RBD domain; the sequence is NTIRVFLPNK…IGEELQVDFL (76 aa). Residues 138-184 form a Phorbol-ester/DAG-type zinc finger; that stretch reads THNFARKTFLKLAFCDICQKFLLNGFRCQTCGYKFHEHCSTKVPTMC. Disordered stretches follow at residues 236–269 and 284–334; these read HVFTFNTSNPSSEGTLSQRQRSTSTPNVHMVSTT and HSES…RPRG. A compositionally biased stretch (polar residues) spans 239–269; it reads TFNTSNPSSEGTLSQRQRSTSTPNVHMVSTT. S259 carries the phosphoserine modification. T268 is subject to Phosphothreonine; by autocatalysis. Residues 286-297 are compositionally biased toward low complexity; sequence ESASPSALSGSP. The segment covering 298–309 has biased composition (polar residues); it reads NNMSPTGWSQPK. Phosphoserine is present on S338. One can recognise a Protein kinase domain in the interval 349–609; the sequence is VMLSTRIGSG…PQILSSIELL (261 aa). ATP is bound by residues 355–363 and K375; that span reads IGSGSFGTV. Catalysis depends on D468, which acts as the Proton acceptor. A phosphoserine mark is found at S499 and S621.

Belongs to the protein kinase superfamily. TKL Ser/Thr protein kinase family. RAF subfamily. In terms of processing, phosphorylation at Ser-259 inactivates kinase activity. Dephosphorylation of Ser-259 by a complex containing protein phosphatase 1 relieves inactivation, leading to stimulate RAF1 activity. As to expression, isoform 1 was present in all tissues tested: skeletal muscle, intestine, brain, gizzard, heart, lung, kidney, bone marrow, spleen and bursa of Fabricius. Isoform 2 was only detected in brain, heart and skeletal muscle. In brain and heart isoform 1 is more abundant than isoform 2. In skeletal muscle isoform 2 is more abundant than isoform 1.

The protein localises to the cytoplasm. It is found in the cell membrane. The enzyme catalyses L-seryl-[protein] + ATP = O-phospho-L-seryl-[protein] + ADP + H(+). The catalysed reaction is L-threonyl-[protein] + ATP = O-phospho-L-threonyl-[protein] + ADP + H(+). Serine/threonine-protein kinase that acts as a regulatory link between the membrane-associated Ras GTPases and the MAPK/ERK cascade, and this critical regulatory link functions as a switch determining cell fate decisions. RAF1 activation initiates a mitogen-activated protein kinase (MAPK) cascade that comprises a sequential phosphorylation of the dual-specific MAPK kinases (MAP2K1/MEK1 and MAP2K2/MEK2) and the extracellular signal-regulated kinases (MAPK3/ERK1 and MAPK1/ERK2). This is RAF proto-oncogene serine/threonine-protein kinase (RAF1) from Gallus gallus (Chicken).